Reading from the N-terminus, the 419-residue chain is 2-amino-3-ketobutyrate coenzyme A ligase, mitochondrial (419 aa).

Residues 1-21 (MWPGNAWRAALFWVPRGRRAQ) constitute a mitochondrion transit peptide. Residue Lys45 is modified to N6-acetyllysine; alternate. An N6-succinyllysine; alternate modification is found at Lys45. Residue 134–135 (CY) coordinates pyridoxal 5'-phosphate. Residue His159 coordinates substrate. The residue at position 187 (Lys187) is an N6-acetyllysine; alternate. The residue at position 187 (Lys187) is an N6-succinyllysine; alternate. Pyridoxal 5'-phosphate-binding positions include Ser206, 262–265 (TLGK), and 295–296 (SN). An N6-(pyridoxal phosphate)lysine modification is found at Lys265. Residues Lys326 and Lys368 each carry the N6-succinyllysine modification. Lys383 is subject to N6-acetyllysine; alternate. Lys383 bears the N6-succinyllysine; alternate mark. Substrate is bound at residue Arg389.

Belongs to the class-II pyridoxal-phosphate-dependent aminotransferase family. Requires pyridoxal 5'-phosphate as cofactor. In terms of tissue distribution, strongly expressed in heart, brain, liver and pancreas. Also found in lung.

Its subcellular location is the mitochondrion. It is found in the nucleus. It carries out the reaction glycine + acetyl-CoA = (2S)-2-amino-3-oxobutanoate + CoA. In terms of biological role, pyridoxal phosphate (PLP) dependent enzyme, which catalyzes the cleavage of 2-amino-3-oxobutanoate to glycine and acetyl-CoA. This Homo sapiens (Human) protein is 2-amino-3-ketobutyrate coenzyme A ligase, mitochondrial.